A 272-amino-acid polypeptide reads, in one-letter code: Shikimate dehydrogenase (NADP(+)) (272 aa).

Shikimate contacts are provided by residues 14–16 and threonine 61; that span reads SKS. Lysine 65 (proton acceptor) is an active-site residue. Glutamate 77 is an NADP(+) binding site. Asparagine 86 and aspartate 102 together coordinate shikimate. Residues 126-130, 149-154, and methionine 213 contribute to the NADP(+) site; these read GAGGA and NRTVSR. Tyrosine 215 lines the shikimate pocket. Position 237 (glycine 237) interacts with NADP(+).

It belongs to the shikimate dehydrogenase family. As to quaternary structure, homodimer.

The enzyme catalyses shikimate + NADP(+) = 3-dehydroshikimate + NADPH + H(+). It participates in metabolic intermediate biosynthesis; chorismate biosynthesis; chorismate from D-erythrose 4-phosphate and phosphoenolpyruvate: step 4/7. Its function is as follows. Involved in the biosynthesis of the chorismate, which leads to the biosynthesis of aromatic amino acids. Catalyzes the reversible NADPH linked reduction of 3-dehydroshikimate (DHSA) to yield shikimate (SA). This is Shikimate dehydrogenase (NADP(+)) from Escherichia coli O7:K1 (strain IAI39 / ExPEC).